The chain runs to 558 residues: SPATS2-like protein (558 aa).

Ala2 is subject to N-acetylalanine. Basic residues predominate over residues 63–79 (GKKKNNKRKRSKSKQHQ). Disordered regions lie at residues 63–148 (GKKK…RGIT) and 161–202 (DGNP…SNAP). Basic and acidic residues-rich tracts occupy residues 80-92 (GNKD…ERPE) and 110-142 (GCEK…EPPR). At Ser120 the chain carries Phosphoserine. The stretch at 279–344 (KEEAMDILTA…ARFSCDIEQL (66 aa)) forms a coiled coil. A disordered region spans residues 383-514 (KQGNFSRKSS…SEKARRRQHA (132 aa)). Positions 416–433 (DACQQTMPTNKQQNGPSN) are enriched in polar residues. Ser455 is subject to Phosphoserine. Residues 469 to 485 (HEHRRQPHNGFRPKNKG) are compositionally biased toward basic residues.

Belongs to the SPATS2 family.

The protein resides in the cytoplasm. It localises to the nucleus. It is found in the nucleolus. In Rattus norvegicus (Rat), this protein is SPATS2-like protein (Spats2l).